Consider the following 85-residue polypeptide: U4-theraphotoxin-Hhn1z (85 aa).

The first 22 residues, 1–22 (MKMTLIAILTCAAVLVLHTTAA), serve as a signal peptide directing secretion. The propeptide occupies 23–48 (EELEAESQLMEVGMPDTELEAVDEER). Intrachain disulfides connect Cys52–Cys66, Cys56–Cys77, and Cys71–Cys82.

It belongs to the neurotoxin 12 (Hwtx-2) family. 02 (Hwtx-2) subfamily. Expressed by the venom gland.

The protein resides in the secreted. Functionally, postsynaptic neurotoxin. The sequence is that of U4-theraphotoxin-Hhn1z from Cyriopagopus hainanus (Chinese bird spider).